The chain runs to 152 residues: 3-hydroxyacyl-[acyl-carrier-protein] dehydratase FabZ (152 aa).

His-57 is an active-site residue.

The protein belongs to the thioester dehydratase family. FabZ subfamily.

Its subcellular location is the cytoplasm. It carries out the reaction a (3R)-hydroxyacyl-[ACP] = a (2E)-enoyl-[ACP] + H2O. In terms of biological role, involved in unsaturated fatty acids biosynthesis. Catalyzes the dehydration of short chain beta-hydroxyacyl-ACPs and long chain saturated and unsaturated beta-hydroxyacyl-ACPs. This chain is 3-hydroxyacyl-[acyl-carrier-protein] dehydratase FabZ, found in Bradyrhizobium sp. (strain BTAi1 / ATCC BAA-1182).